The chain runs to 115 residues: Protein TrbA (115 aa).

4 helical membrane passes run 5 to 25, 39 to 59, 60 to 80, and 91 to 111; these read YLKMFTGVVLLIFVIIAGYFF, LVFLVVNIACLYVLTASLWFL, CGAIMSQGAALVVSIVAAALP, and IFICIMLSSVWSGVMWFFIRG.

It is found in the cell membrane. This is Protein TrbA (trbA) from Escherichia coli (strain K12).